The sequence spans 264 residues: MKQYLDLMKKVLEEGTPKADRTGTGTLSIFGHQMRFNLQDGFPLVTTKRCHLRSIIHELLWFLNGDTNIAYLKENNVSIWDEWADENGDLGPIYGKQWRAWGAADGRKIDQLSNVVNQLKQDPDSRRIIVSAWNVGELDQMALAPCHAFFQFYVADGKLSCQLYQRSCDVFLGLPFNIASYALLVHMMAQQCDLAVGDFVWTGGDTHLYSNHIDQTHLQLSREPRALPKLVIKRKPDSLFDYHFDDFDIEGYDPHPGIKAPIAI.

Residue Arg21 coordinates dUMP. His51 lines the (6R)-5,10-methylene-5,6,7,8-tetrahydrofolate pocket. 126 to 127 serves as a coordination point for dUMP; the sequence is RR. Residue Cys146 is the Nucleophile of the active site. Residues 166-169, Asn177, and 207-209 each bind dUMP; these read RSCD and HLY. A (6R)-5,10-methylene-5,6,7,8-tetrahydrofolate-binding site is contributed by Asp169. Residue Ala263 coordinates (6R)-5,10-methylene-5,6,7,8-tetrahydrofolate.

This sequence belongs to the thymidylate synthase family. Bacterial-type ThyA subfamily. In terms of assembly, homodimer.

The protein localises to the cytoplasm. It carries out the reaction dUMP + (6R)-5,10-methylene-5,6,7,8-tetrahydrofolate = 7,8-dihydrofolate + dTMP. It participates in pyrimidine metabolism; dTTP biosynthesis. Its function is as follows. Catalyzes the reductive methylation of 2'-deoxyuridine-5'-monophosphate (dUMP) to 2'-deoxythymidine-5'-monophosphate (dTMP) while utilizing 5,10-methylenetetrahydrofolate (mTHF) as the methyl donor and reductant in the reaction, yielding dihydrofolate (DHF) as a by-product. This enzymatic reaction provides an intracellular de novo source of dTMP, an essential precursor for DNA biosynthesis. The polypeptide is Thymidylate synthase (Yersinia pseudotuberculosis serotype O:1b (strain IP 31758)).